The sequence spans 129 residues: Photosystem II reaction center Psb28 protein (129 aa).

The disordered stretch occupies residues 110-129 (GLGYSNNSGNNEGADEASEG).

Belongs to the Psb28 family. As to quaternary structure, part of the photosystem II complex.

It localises to the cellular thylakoid membrane. The chain is Photosystem II reaction center Psb28 protein from Synechococcus sp. (strain WH7803).